The sequence spans 574 residues: Dihydroxy-acid dehydratase 2 (574 aa).

The disordered stretch occupies residues 1–20 (MNAKTNIKQRLPSRHVTEGP). Cys-56 contacts [2Fe-2S] cluster. A Mg(2+)-binding site is contributed by Asp-88. Cys-129 contacts [2Fe-2S] cluster. Positions 130 and 131 each coordinate Mg(2+). At Lys-131 the chain carries N6-carboxylysine. Cys-201 is a [2Fe-2S] cluster binding site. Glu-451 provides a ligand contact to Mg(2+). Ser-477 serves as the catalytic Proton acceptor.

It belongs to the IlvD/Edd family. Homodimer. [2Fe-2S] cluster serves as cofactor. The cofactor is Mg(2+).

The catalysed reaction is (2R)-2,3-dihydroxy-3-methylbutanoate = 3-methyl-2-oxobutanoate + H2O. It catalyses the reaction (2R,3R)-2,3-dihydroxy-3-methylpentanoate = (S)-3-methyl-2-oxopentanoate + H2O. It functions in the pathway amino-acid biosynthesis; L-isoleucine biosynthesis; L-isoleucine from 2-oxobutanoate: step 3/4. It participates in amino-acid biosynthesis; L-valine biosynthesis; L-valine from pyruvate: step 3/4. Functionally, functions in the biosynthesis of branched-chain amino acids. Catalyzes the dehydration of (2R,3R)-2,3-dihydroxy-3-methylpentanoate (2,3-dihydroxy-3-methylvalerate) into 2-oxo-3-methylpentanoate (2-oxo-3-methylvalerate) and of (2R)-2,3-dihydroxy-3-methylbutanoate (2,3-dihydroxyisovalerate) into 2-oxo-3-methylbutanoate (2-oxoisovalerate), the penultimate precursor to L-isoleucine and L-valine, respectively. This is Dihydroxy-acid dehydratase 2 from Bradyrhizobium diazoefficiens (strain JCM 10833 / BCRC 13528 / IAM 13628 / NBRC 14792 / USDA 110).